The sequence spans 456 residues: Bifunctional protein GlmU (456 aa).

The pyrophosphorylase stretch occupies residues 1 to 229; sequence MLNNAMSVVI…LSEVEGVNNR (229 aa). UDP-N-acetyl-alpha-D-glucosamine is bound by residues 11-14, lysine 25, glutamine 76, 81-82, 103-105, glycine 140, glutamate 154, asparagine 169, and asparagine 227; these read LAAG, GT, and YGD. Aspartate 105 serves as a coordination point for Mg(2+). Asparagine 227 serves as a coordination point for Mg(2+). Residues 230-250 are linker; the sequence is LQLSRLERVYQSEQAEKLLLA. Residues 251 to 456 are N-acetyltransferase; that stretch reads GVMLRDPARF…EGWRRPVKKK (206 aa). Arginine 333 and lysine 351 together coordinate UDP-N-acetyl-alpha-D-glucosamine. Histidine 363 (proton acceptor) is an active-site residue. Residues tyrosine 366 and asparagine 377 each contribute to the UDP-N-acetyl-alpha-D-glucosamine site. Residues alanine 380, 386–387, serine 405, alanine 423, and arginine 440 contribute to the acetyl-CoA site; that span reads NY.

The protein in the N-terminal section; belongs to the N-acetylglucosamine-1-phosphate uridyltransferase family. It in the C-terminal section; belongs to the transferase hexapeptide repeat family. Homotrimer. Mg(2+) is required as a cofactor.

Its subcellular location is the cytoplasm. The catalysed reaction is alpha-D-glucosamine 1-phosphate + acetyl-CoA = N-acetyl-alpha-D-glucosamine 1-phosphate + CoA + H(+). It carries out the reaction N-acetyl-alpha-D-glucosamine 1-phosphate + UTP + H(+) = UDP-N-acetyl-alpha-D-glucosamine + diphosphate. The protein operates within nucleotide-sugar biosynthesis; UDP-N-acetyl-alpha-D-glucosamine biosynthesis; N-acetyl-alpha-D-glucosamine 1-phosphate from alpha-D-glucosamine 6-phosphate (route II): step 2/2. It participates in nucleotide-sugar biosynthesis; UDP-N-acetyl-alpha-D-glucosamine biosynthesis; UDP-N-acetyl-alpha-D-glucosamine from N-acetyl-alpha-D-glucosamine 1-phosphate: step 1/1. It functions in the pathway bacterial outer membrane biogenesis; LPS lipid A biosynthesis. Its function is as follows. Catalyzes the last two sequential reactions in the de novo biosynthetic pathway for UDP-N-acetylglucosamine (UDP-GlcNAc). The C-terminal domain catalyzes the transfer of acetyl group from acetyl coenzyme A to glucosamine-1-phosphate (GlcN-1-P) to produce N-acetylglucosamine-1-phosphate (GlcNAc-1-P), which is converted into UDP-GlcNAc by the transfer of uridine 5-monophosphate (from uridine 5-triphosphate), a reaction catalyzed by the N-terminal domain. The protein is Bifunctional protein GlmU of Escherichia coli O45:K1 (strain S88 / ExPEC).